Reading from the N-terminus, the 126-residue chain is SPbeta prophage-derived uncharacterized protein YorC (126 aa).

The protein is SPbeta prophage-derived uncharacterized protein YorC (yorC) of Bacillus subtilis (strain 168).